The primary structure comprises 609 residues: Proline--tRNA ligase (609 aa).

This sequence belongs to the class-II aminoacyl-tRNA synthetase family. ProS type 1 subfamily. Homodimer.

The protein resides in the cytoplasm. The enzyme catalyses tRNA(Pro) + L-proline + ATP = L-prolyl-tRNA(Pro) + AMP + diphosphate. Its function is as follows. Catalyzes the attachment of proline to tRNA(Pro) in a two-step reaction: proline is first activated by ATP to form Pro-AMP and then transferred to the acceptor end of tRNA(Pro). As ProRS can inadvertently accommodate and process non-cognate amino acids such as alanine and cysteine, to avoid such errors it has two additional distinct editing activities against alanine. One activity is designated as 'pretransfer' editing and involves the tRNA(Pro)-independent hydrolysis of activated Ala-AMP. The other activity is designated 'posttransfer' editing and involves deacylation of mischarged Ala-tRNA(Pro). The misacylated Cys-tRNA(Pro) is not edited by ProRS. The protein is Proline--tRNA ligase of Synechococcus sp. (strain JA-3-3Ab) (Cyanobacteria bacterium Yellowstone A-Prime).